The sequence spans 71 residues: UPF0346 protein SZO_05010 (71 aa).

It belongs to the UPF0346 family.

This is UPF0346 protein SZO_05010 from Streptococcus equi subsp. zooepidemicus (strain H70).